The following is a 212-amino-acid chain: Protein GET1 (212 aa).

Residues 1 to 4 lie on the Lumenal side of the membrane; it reads MASL. The helical transmembrane segment at 5–24 threads the bilayer; it reads LLFVLVIQIITYLINTIGAR. The Cytoplasmic segment spans residues 25–110; sequence TIDSLLWLLY…SFDWTIKTVR (86 aa). Residues 75–99 are a coiled coil; it reads AKLRRRHDKAMEEYDVKNKKLSALK. A helical transmembrane segment spans residues 111 to 131; that stretch reads WVSTTGVTVILQFWFSKSPIF. Residues 132–155 are Lumenal-facing; sequence DLPRGWLPWQVEWILSFPRAPLGT. A helical membrane pass occupies residues 156 to 172; the sequence is VSIQVWGGACGTVIALV. Topologically, residues 173 to 212 are cytoplasmic; that stretch reads GGAMGVAAPAFKKINQPRGEAQKMGTPRGSREQTPVRKTQ. The segment at 189 to 212 is disordered; sequence PRGEAQKMGTPRGSREQTPVRKTQ. Positions 201–212 are enriched in basic and acidic residues; that stretch reads GSREQTPVRKTQ.

This sequence belongs to the WRB/GET1 family. Interacts with GET3.

It is found in the endoplasmic reticulum membrane. Functionally, required for the post-translational delivery of tail-anchored (TA) proteins to the endoplasmic reticulum. Acts as a membrane receptor for soluble GET3, which recognizes and selectively binds the transmembrane domain of TA proteins in the cytosol. In Arthroderma otae (strain ATCC MYA-4605 / CBS 113480) (Microsporum canis), this protein is Protein GET1.